The sequence spans 425 residues: Non-structural protein 2 (425 aa).

The stretch at 29–64 forms a coiled coil; that stretch reads VSFDELVALREENAKLKQENEALKAKLHRLESDWTT.

This Banna virus (BAV) protein is Non-structural protein 2 (Segment-6).